The primary structure comprises 550 residues: Arginine--tRNA ligase (550 aa).

Positions 130-140 (ANPTGPIHIGG) match the 'HIGH' region motif.

This sequence belongs to the class-I aminoacyl-tRNA synthetase family. Monomer.

The protein resides in the cytoplasm. The enzyme catalyses tRNA(Arg) + L-arginine + ATP = L-arginyl-tRNA(Arg) + AMP + diphosphate. The sequence is that of Arginine--tRNA ligase (argS) from Mycolicibacterium smegmatis (strain ATCC 700084 / mc(2)155) (Mycobacterium smegmatis).